The sequence spans 69 residues: Mu-conotoxin-like Am3.3 (69 aa).

Positions 1–20 (MMSKLGVLLTICLLLFPLTA) are cleaved as a signal peptide. Residues 21–52 (VPLDGDQPADRPAERMQDDISSENHPMFDAIR) constitute a propeptide that is removed on maturation. Cysteine 68 bears the Cysteine amide mark.

The protein belongs to the conotoxin M family. Is not hydroxylated. Post-translationally, contains 3 disulfide bonds. In terms of tissue distribution, expressed by the venom duct.

It localises to the secreted. Its function is as follows. Mu-conotoxins block voltage-gated sodium channels (Nav). The polypeptide is Mu-conotoxin-like Am3.3 (Conus amadis (Amadis cone)).